The chain runs to 142 residues: Relaxin-3 (142 aa).

An N-terminal signal peptide occupies residues 1 to 25 (MARYMLLLLLAVWVLTGELWPGAEA). 3 disulfide bridges follow: cysteine 35–cysteine 129, cysteine 47–cysteine 142, and cysteine 128–cysteine 133. Residues 55-118 (SDILAHEAMG…GTPGVLRGSR (64 aa)) constitute a propeptide, connecting peptide.

This sequence belongs to the insulin family. In terms of assembly, heterodimer of a B chain and an A chain linked by two disulfide bonds.

It localises to the secreted. Its function is as follows. May play a role in neuropeptide signaling processes. Ligand for LGR7, RXFP3 and RXFP4. The polypeptide is Relaxin-3 (RLN3) (Homo sapiens (Human)).